The primary structure comprises 229 residues: Ribonuclease 3 (229 aa).

The RNase III domain maps to 5–127 (LSRLERQLGY…LIGAIYLDAG (123 aa)). Glu-40 serves as a coordination point for Mg(2+). Asp-44 is a catalytic residue. Mg(2+)-binding residues include Asp-113 and Glu-116. Residue Glu-116 is part of the active site. A DRBM domain is found at 154 to 224 (DPKTRLQEFL…AAAALIALGV (71 aa)).

It belongs to the ribonuclease III family. In terms of assembly, homodimer. Mg(2+) is required as a cofactor.

The protein localises to the cytoplasm. It carries out the reaction Endonucleolytic cleavage to 5'-phosphomonoester.. Functionally, digests double-stranded RNA. Involved in the processing of primary rRNA transcript to yield the immediate precursors to the large and small rRNAs (23S and 16S). Processes some mRNAs, and tRNAs when they are encoded in the rRNA operon. Processes pre-crRNA and tracrRNA of type II CRISPR loci if present in the organism. This chain is Ribonuclease 3, found in Pseudomonas syringae pv. tomato (strain ATCC BAA-871 / DC3000).